The sequence spans 469 residues: 6-phospho-beta-galactosidase (469 aa).

D-galactose 6-phosphate-binding residues include Gln19, His116, Asn159, Glu160, and Asn297. Residue Glu160 is the Proton donor of the active site. Residue Glu375 is the Nucleophile of the active site. The D-galactose 6-phosphate site is built by Ser428, Trp429, Lys435, and Tyr437.

The protein belongs to the glycosyl hydrolase 1 family.

It carries out the reaction a 6-phospho-beta-D-galactoside + H2O = D-galactose 6-phosphate + an alcohol. Its pathway is carbohydrate metabolism; lactose degradation; D-galactose 6-phosphate and beta-D-glucose from lactose 6-phosphate: step 1/1. This is 6-phospho-beta-galactosidase from Streptococcus equi subsp. zooepidemicus (strain H70).